The chain runs to 103 residues: SOSS complex subunit C (103 aa).

This sequence belongs to the SOSS-C family. Belongs to the multiprotein complex Integrator. Component of the SOSS complex, composed of SOSS-B (SOSS-B1/NABP2 or SOSS-B2/NABP1), SOSS-A/INTS3 and SOSS-C/INIP.

It localises to the nucleus. Component of the SOSS complex, a multiprotein complex that functions downstream of the MRN complex to promote DNA repair and G2/M checkpoint. The SOSS complex associates with single-stranded DNA at DNA lesions and influences diverse endpoints in the cellular DNA damage response including cell-cycle checkpoint activation, recombinational repair and maintenance of genomic stability. Required for efficient homologous recombination-dependent repair of double-strand breaks (DSBs). The sequence is that of SOSS complex subunit C (INIP) from Gallus gallus (Chicken).